Here is a 105-residue protein sequence, read N- to C-terminus: UPF0145 protein lpp0255 (105 aa).

Belongs to the UPF0145 family.

The protein is UPF0145 protein lpp0255 of Legionella pneumophila (strain Paris).